The following is a 153-amino-acid chain: Ribosome maturation factor RimP (153 aa).

The protein belongs to the RimP family.

The protein localises to the cytoplasm. In terms of biological role, required for maturation of 30S ribosomal subunits. The protein is Ribosome maturation factor RimP of Clostridioides difficile (strain 630) (Peptoclostridium difficile).